Consider the following 88-residue polypeptide: Small ribosomal subunit protein uS17 (88 aa).

It belongs to the universal ribosomal protein uS17 family. In terms of assembly, part of the 30S ribosomal subunit.

One of the primary rRNA binding proteins, it binds specifically to the 5'-end of 16S ribosomal RNA. The protein is Small ribosomal subunit protein uS17 of Prochlorococcus marinus (strain MIT 9301).